The primary structure comprises 243 residues: Triosephosphate isomerase (243 aa).

9-11 provides a ligand contact to substrate; the sequence is NWK. His96 serves as the catalytic Electrophile. The active-site Proton acceptor is the Glu165. Residues Gly171, Ser204, and 225–226 each bind substrate; that span reads GG.

The protein belongs to the triosephosphate isomerase family. Homodimer.

It is found in the cytoplasm. The catalysed reaction is D-glyceraldehyde 3-phosphate = dihydroxyacetone phosphate. Its pathway is carbohydrate biosynthesis; gluconeogenesis. The protein operates within carbohydrate degradation; glycolysis; D-glyceraldehyde 3-phosphate from glycerone phosphate: step 1/1. In terms of biological role, involved in the gluconeogenesis. Catalyzes stereospecifically the conversion of dihydroxyacetone phosphate (DHAP) to D-glyceraldehyde-3-phosphate (G3P). The polypeptide is Triosephosphate isomerase (Synechococcus sp. (strain WH7803)).